Consider the following 331-residue polypeptide: UPF0284 protein PF0303 (331 aa).

This sequence belongs to the UPF0284 family.

The chain is UPF0284 protein PF0303 from Pyrococcus furiosus (strain ATCC 43587 / DSM 3638 / JCM 8422 / Vc1).